Reading from the N-terminus, the 331-residue chain is N-arachidonyl glycine receptor (331 aa).

Residues 1–26 (MATLSNHNQLDLSNGSHPEEYKIAAL) are Extracellular-facing. An N-linked (GlcNAc...) asparagine glycan is attached at asparagine 14. Residues 27 to 47 (VFYSCIFLIGLFVNVTALWVF) traverse the membrane as a helical segment. At 48-56 (SCTTKKRTT) the chain is on the cytoplasmic side. Residues 57–77 (VTIYMMNVALLDLVFILSLPF) form a helical membrane-spanning segment. Residues 78–95 (RMFYYAKGEWPFGEYFCH) are Extracellular-facing. A disulfide bond links cysteine 94 and cysteine 172. Residues 96–116 (ILGALVVFYPSLALWLLAFIS) traverse the membrane as a helical segment. Residues 117–138 (ADRYMAIVQPKYAKELKNTGKA) lie on the Cytoplasmic side of the membrane. Residues 139–159 (VLACGGVWVMTLTTTVPLLLL) form a helical membrane-spanning segment. Residues 160 to 191 (YEDPDKASSPATCLKISDITHLKAVNVLNFTR) lie on the Extracellular side of the membrane. Residue asparagine 188 is glycosylated (N-linked (GlcNAc...) asparagine). The helical transmembrane segment at 192–212 (LIFFFLIPLFIMIGCYVVIIH) threads the bilayer. Residues 213–236 (SLLRGQTSKLKPKVKEKSIRIIMT) are Cytoplasmic-facing. Residues 237–257 (LLLQVLVCFVPFHICFAVLML) traverse the membrane as a helical segment. The Extracellular segment spans residues 258–268 (QGQENSYSPWG). A helical transmembrane segment spans residues 269–289 (AFTTFLMNLSTCLDVVLYYIV). The Cytoplasmic segment spans residues 290 to 331 (SKQFQARVISVMLYRNYLRSVRRKSVRSGSLRSLSNMNSEML). A Phosphoserine modification is found at serine 322.

The protein belongs to the G-protein coupled receptor 1 family. In terms of tissue distribution, expressed in the eye including cornea, retina, iris and ciliary epithelium (at protein level). Expressed in spleen, liver and lymphocytes with highest expression levels in intestinal intraepithelial lymphocytes.

The protein localises to the cell membrane. It is found in the cytoplasmic vesicle membrane. In terms of biological role, g protein-coupled receptor (GPCR) that plays a role in diverse physiological processes particularly within the immune and nervous systems. Becomes active when triggered by various endogenous ligands including endocannabinoid N-arachidonyl glycine (NAGly), delta-9-tetrahydrocannabinol or resolvin D2/RvD2 derived from the omega-3 fatty acid docosahexaenoic acid (DHA). Upon RvD2 binding, facilitates the resolution of inflammation, aiding in tissue repair and homeostasis. Mechanistically, RvD2 ligation initiates Galphas protein coupling, activation of cAMP-PKA signaling pathway and phosphorylation of STAT3, leading to RvD2-stimulated macrophage phagocytosis. Mediates NAGly-induced process of reorganization of actin filaments and induction of acrosomal exocytosis. Activation by N-arachidonoyl glycine (NAGly) can also induce apoptosis in macrophages. Plays a role in homeostasis of CD8+ subsets of intraepithelial lymphocytes (IELs) (CD8alphaalpha and CD8alphabeta IELs) in small intestine by supporting preferential migration of CD8alphaalpha T-cells to intraepithelial compartment over lamina propria compartment, and by mediating their reconstitution into small intestine after bone marrow transplant. Also participates in hypotensive responses, mediating reduction in intraocular and blood pressure. In Mus musculus (Mouse), this protein is N-arachidonyl glycine receptor.